The sequence spans 259 residues: MAVTIHQLRTWKEQGRPISVLTAWDFPFATLLDQAGVDVLLVGDSLAMVALGYPTTLPLTLDEMLYHAQAVTRGVNHALVICDLPFLSYQESPQQALRSAGTLLQQAGVAAVKLEGGYPDMAKTVHYLVDRGIPVMGHVGLTPQSVHQFSGYRRQGTSDVEADRILQEAIALEAAGAFAIVLEHIPAPLATKITQTLTIPTIGIGAGPGCDGQVLVTADMLGLSAWQPPFAKAYTNLQESITGAVQQFCDDVRHHQFPQ.

Mg(2+) is bound by residues Asp-44 and Asp-83. 3-methyl-2-oxobutanoate-binding positions include 44 to 45, Asp-83, and Lys-113; that span reads DS. Position 115 (Glu-115) interacts with Mg(2+). The Proton acceptor role is filled by Glu-183.

This sequence belongs to the PanB family. As to quaternary structure, homodecamer; pentamer of dimers. The cofactor is Mg(2+).

The protein resides in the cytoplasm. It catalyses the reaction 3-methyl-2-oxobutanoate + (6R)-5,10-methylene-5,6,7,8-tetrahydrofolate + H2O = 2-dehydropantoate + (6S)-5,6,7,8-tetrahydrofolate. It functions in the pathway cofactor biosynthesis; (R)-pantothenate biosynthesis; (R)-pantoate from 3-methyl-2-oxobutanoate: step 1/2. Its function is as follows. Catalyzes the reversible reaction in which hydroxymethyl group from 5,10-methylenetetrahydrofolate is transferred onto alpha-ketoisovalerate to form ketopantoate. This chain is 3-methyl-2-oxobutanoate hydroxymethyltransferase, found in Acaryochloris marina (strain MBIC 11017).